A 400-amino-acid chain; its full sequence is MQTILVLTTFLSAWFLAVGFDVFWNVPSQQCKKYGMKFVPLLEQYSILVNKEDNFKGDKITIFYESQLGLYPHIGANDESFNGGIPQLGDLKAHLEKSAVDIRRDILDKSATGLRIIDWEAWRPIWEFNWSSLRKYQDKMKKVVRQFNPTAHESTVAKLAHNEWENSSKSWMLSTLQLGKQLRPNSVWCYYLFPDCYNYDGNSVQEFQCSEAIRKGNDRLKWLWEESTAVCPSIYIKEGQLTNYTLQKRIWFTNGRLQEALRVAQPKARIYPYINYSIKPGMMVPEVEFWRLIAQIASLGMDGAVIWGSSASVGSKNHCAQLMKYIADVLGPATLRIKENVARCSKQACSGRGRCTWPKDTSVIAWKFLVEKEDYDFYLGDIECKCVEGYEGRYCEQKTK.

Residues 1 to 19 (MQTILVLTTFLSAWFLAVG) form the signal peptide. Intrachain disulfides connect Cys31–Cys319, Cys196–Cys209, Cys344–Cys355, Cys349–Cys384, and Cys386–Cys395. The active-site Proton donor is Glu120. Asn129 and Asn166 each carry an N-linked (GlcNAc...) asparagine glycan. Asn243 and Asn275 each carry an N-linked (GlcNAc...) asparagine glycan. An EGF-like domain is found at 340-396 (NVARCSKQACSGRGRCTWPKDTSVIAWKFLVEKEDYDFYLGDIECKCVEGYEGRYCE).

The protein belongs to the glycosyl hydrolase 56 family. Monomer. Expressed by the venom gland.

The protein localises to the secreted. It catalyses the reaction Random hydrolysis of (1-&gt;4)-linkages between N-acetyl-beta-D-glucosamine and D-glucuronate residues in hyaluronate.. In terms of biological role, spider venom endo-hyaluronidase that is able to degrade purified hyaluronic acid (HA) and chondroitin sulfate (CS). Has no activity on dermatan sulfate (DS) and heparan sulfate (HS). Also increases the dermonecrotic effect of the dermonecrotic toxin (AC P0CE80), when injected in rabbit skin, supporting the hypothesis that venom hyaluronidases are spreading factors. This is Hyaluronidase from Loxosceles intermedia (Brown spider).